We begin with the raw amino-acid sequence, 499 residues long: Proline dehydrogenase 1, mitochondrial (499 aa).

Residues 1 to 72 (MATRLLRTNF…LDLSDQARLF (72 aa)) constitute a mitochondrion transit peptide.

It belongs to the proline oxidase family. It depends on FAD as a cofactor. In terms of tissue distribution, ubiquitous. Highest expression in pollen grains, in the stigma and in developing embryos.

It is found in the mitochondrion. It catalyses the reaction L-proline + a quinone = (S)-1-pyrroline-5-carboxylate + a quinol + H(+). The protein operates within amino-acid degradation; L-proline degradation into L-glutamate; L-glutamate from L-proline: step 1/2. Its function is as follows. Converts proline to delta-1-pyrroline-5-carboxylate. This Arabidopsis thaliana (Mouse-ear cress) protein is Proline dehydrogenase 1, mitochondrial (POX1).